We begin with the raw amino-acid sequence, 111 residues long: Cytochrome c (111 aa).

Position 1 is an N-acetylalanine (alanine 1). Heme c is bound by residues cysteine 22, cysteine 25, and histidine 26. Lysine 80 is subject to N6,N6,N6-trimethyllysine. Residue methionine 88 coordinates heme c. At lysine 94 the chain carries N6,N6,N6-trimethyllysine.

It belongs to the cytochrome c family. Post-translationally, binds 1 heme c group covalently per subunit.

The protein resides in the mitochondrion intermembrane space. Electron carrier protein. The oxidized form of the cytochrome c heme group can accept an electron from the heme group of the cytochrome c1 subunit of cytochrome reductase. Cytochrome c then transfers this electron to the cytochrome oxidase complex, the final protein carrier in the mitochondrial electron-transport chain. This Nigella damascena (Love-in-a-mist) protein is Cytochrome c.